The following is a 108-amino-acid chain: Cytochrome c oxidase subunit 1 (108 aa).

A helical membrane pass occupies residues 10–30 (AFVAPVLGLLGFIPGGAGGIV). His49 is a heme a3 binding site. 2 helical membrane-spanning segments follow: residues 50–70 (FHLQ…YWLL) and 85–105 (LGLA…VGLH). A Fe(II)-heme a-binding site is contributed by His51.

This sequence belongs to the heme-copper respiratory oxidase family. Heme serves as cofactor. It depends on Cu cation as a cofactor.

It localises to the cell membrane. The catalysed reaction is 4 Fe(II)-[cytochrome c] + O2 + 8 H(+)(in) = 4 Fe(III)-[cytochrome c] + 2 H2O + 4 H(+)(out). It functions in the pathway energy metabolism; oxidative phosphorylation. This is Cytochrome c oxidase subunit 1 (cbaA) from Thermus thermophilus.